The chain runs to 540 residues: MALAGPSRLLALAVRLLLEPRRNLVVRGSDQSLPVVRVPRALQRRQEQRQSGRGSLQRPVLVRPGPLLVSARRPELNQPARLTLGRWERAPLASRGWKHRRSRQDHFSIERVQQEAPALRNLSSRGSFVDLGLEPRVLLALQEAVPEVVQPTSVQSKTIPPLLRGRHLLCAAETGSGKTLSYLLPLFQRLLRGSDLDSRSFTAPRGLVLVPSRELAEQVQAVAQSLGGYLGLQVIELGGGLGMSRLKLQLYRRPAADVLVATPGALWKALKSQLISLQHLNFIVLDEVDTLLDESFLELVDYILEKSPIAESPAELEDPFNPKAQLVLVGATFPEGLNQLLSKVTSPDSLTTITSSKLHCLMPHVRQTFMRLKGADKVTELVQILKQQDKASKTEPSGTVLVFCNSASTVNWLGYILDDHKIQHLRLQGQMPASMRAGIFQSFQKGSQNILVCTDIASRGLDSVHVEVVINYDFPPTLQDYIHRAGRVGRVGSEVPGSVISFVTHPWDVSLVQKIELAARRRRSLPGLASSVGDPLPQKA.

The short motif at 3 to 18 (LAGPSRLLALAVRLLL) is the Mitochondrial targeting signal element. A Q motif motif is present at residues 126–156 (GSFVDLGLEPRVLLALQEAVPEVVQPTSVQS). Positions 159–351 (IPPLLRGRHL…SKVTSPDSLT (193 aa)) constitute a Helicase ATP-binding domain. 172-179 (AETGSGKT) contacts ATP. The short motif at 180–191 (LSYLLPLFQRLL) is the Nuclear export signal element. A DEAD motif is present at residues 286-289 (DEVD). In terms of domain architecture, Helicase C-terminal spans 377 to 536 (KVTELVQILK…GLASSVGDPL (160 aa)). The Nuclear localization signal signature appears at 520-523 (RRRR).

It belongs to the DEAD box helicase family. Monomer. Found in a complex with GRSF1, DHX30, FASTKD2 and FASTKD5. Associates with the 16S mitochondrial rRNA (16S mt-rRNA) and with the mitochondrial ribosome large subunit (39S).

It is found in the nucleus. The protein resides in the mitochondrion. Its subcellular location is the mitochondrion matrix. It localises to the mitochondrion nucleoid. The enzyme catalyses ATP + H2O = ADP + phosphate + H(+). Its function is as follows. Plays an essential role in facilitating the proper assembly of the mitochondrial large ribosomal subunit and its helicase activity is essential for this function. May be involved in RNA processing or transport. Has RNA and Mg(2+)-dependent ATPase activity. The chain is Probable ATP-dependent RNA helicase DDX28 (Ddx28) from Mus musculus (Mouse).